The primary structure comprises 885 residues: DNA-directed RNA polymerase subunit Rpo1N (885 aa).

The Zn(2+) site is built by C60, C63, C70, H73, C100, C103, C150, and C153. Mg(2+) is bound by residues D464, D466, and D468.

The protein belongs to the RNA polymerase beta' chain family. Part of the RNA polymerase complex. Mg(2+) serves as cofactor. The cofactor is Zn(2+).

The protein resides in the cytoplasm. The enzyme catalyses RNA(n) + a ribonucleoside 5'-triphosphate = RNA(n+1) + diphosphate. Functionally, DNA-dependent RNA polymerase (RNAP) catalyzes the transcription of DNA into RNA using the four ribonucleoside triphosphates as substrates. Forms the clamp head domain. The protein is DNA-directed RNA polymerase subunit Rpo1N of Thermoplasma acidophilum (strain ATCC 25905 / DSM 1728 / JCM 9062 / NBRC 15155 / AMRC-C165).